The following is an 859-amino-acid chain: Magnesium transporter ALR1 (859 aa).

Over residues 1–20 (MSSSSSSSESSPNLSRSNSL) the composition is skewed to low complexity. Disordered stretches follow at residues 1–281 (MSSS…MPPQ) and 330–399 (TSST…NIPS). The residue at position 2 (Ser-2) is an N-acetylserine. Basic and acidic residues-rich tracts occupy residues 28–42 (KTED…RQHP) and 55–73 (KNKE…EQKS). A Phosphotyrosine modification is found at Tyr-77. Ser-85 carries the post-translational modification Phosphoserine. The segment covering 144–154 (PPKDVGVKRDY) has biased composition (basic and acidic residues). Over residues 157-176 (SSSTASSGNKSKLSASSSAS) the composition is skewed to low complexity. Phosphoserine occurs at positions 185 and 188. Residues 193 to 203 (IPHESKSDTHS) are compositionally biased toward basic and acidic residues. The segment covering 213–235 (YSTTSAHSSINPAVLLTKSTSQK) has biased composition (polar residues). Residues Ser-220, Ser-221, and Ser-236 each carry the phosphoserine modification. Phosphothreonine is present on Thr-242. The segment covering 252–265 (TRASFDSDVSQASR) has biased composition (polar residues). Residues 330-339 (TSSTSTSGSS) are compositionally biased toward low complexity. A compositionally biased stretch (basic and acidic residues) spans 353 to 375 (EKSESTNETEIHEKKEDEHEKIK). Transmembrane regions (helical) follow at residues 744–764 (TMIG…GMNV) and 773–793 (IAWW…GWFL). The disordered stretch occupies residues 830-859 (FNDRSKNINVRAGPSNKSVASLPSRYSRYD). Ser-850 carries the phosphoserine modification.

This sequence belongs to the CorA metal ion transporter (MIT) (TC 1.A.35) family.

It localises to the cell membrane. In terms of biological role, plasma membrane magnesium transporter. The chain is Magnesium transporter ALR1 (ALR1) from Saccharomyces cerevisiae (strain ATCC 204508 / S288c) (Baker's yeast).